Consider the following 379-residue polypeptide: UDP-4-amino-4-deoxy-L-arabinose--oxoglutarate aminotransferase (379 aa).

The residue at position 182 (lysine 182) is an N6-(pyridoxal phosphate)lysine.

The protein belongs to the DegT/DnrJ/EryC1 family. ArnB subfamily. In terms of assembly, homodimer. The cofactor is pyridoxal 5'-phosphate.

It catalyses the reaction UDP-4-amino-4-deoxy-beta-L-arabinose + 2-oxoglutarate = UDP-beta-L-threo-pentopyranos-4-ulose + L-glutamate. It participates in nucleotide-sugar biosynthesis; UDP-4-deoxy-4-formamido-beta-L-arabinose biosynthesis; UDP-4-deoxy-4-formamido-beta-L-arabinose from UDP-alpha-D-glucuronate: step 2/3. Its pathway is bacterial outer membrane biogenesis; lipopolysaccharide biosynthesis. Its function is as follows. Catalyzes the conversion of UDP-4-keto-arabinose (UDP-Ara4O) to UDP-4-amino-4-deoxy-L-arabinose (UDP-L-Ara4N). The modified arabinose is attached to lipid A and is required for resistance to polymyxin and cationic antimicrobial peptides. The sequence is that of UDP-4-amino-4-deoxy-L-arabinose--oxoglutarate aminotransferase from Shigella flexneri.